The sequence spans 229 residues: Cytochrome c oxidase subunit 2 (229 aa).

The Mitochondrial intermembrane portion of the chain corresponds to 1–26 (MANWTQLGLQDASSPLMEELIYFHDY). Residues 27–48 (TLIILTLITILVFYGLASLIVS) traverse the membrane as a helical segment. At 49–62 (SNTNRFFLEGQSLE) the chain is on the mitochondrial matrix side. Residues 63-82 (TIWTVIPAVILIFIALPSLQ) traverse the membrane as a helical segment. Residues 83–229 (LLYLIDEVNN…ENWVSNFLNE (147 aa)) lie on the Mitochondrial intermembrane side of the membrane. Positions 161, 196, 198, 200, 204, and 207 each coordinate Cu cation. Position 198 (Glu198) interacts with Mg(2+).

Belongs to the cytochrome c oxidase subunit 2 family. Component of the cytochrome c oxidase (complex IV, CIV), a multisubunit enzyme composed of a catalytic core of 3 subunits and several supernumerary subunits. The complex exists as a monomer or a dimer and forms supercomplexes (SCs) in the inner mitochondrial membrane with ubiquinol-cytochrome c oxidoreductase (cytochrome b-c1 complex, complex III, CIII). It depends on Cu cation as a cofactor.

It is found in the mitochondrion inner membrane. It carries out the reaction 4 Fe(II)-[cytochrome c] + O2 + 8 H(+)(in) = 4 Fe(III)-[cytochrome c] + 2 H2O + 4 H(+)(out). Functionally, component of the cytochrome c oxidase, the last enzyme in the mitochondrial electron transport chain which drives oxidative phosphorylation. The respiratory chain contains 3 multisubunit complexes succinate dehydrogenase (complex II, CII), ubiquinol-cytochrome c oxidoreductase (cytochrome b-c1 complex, complex III, CIII) and cytochrome c oxidase (complex IV, CIV), that cooperate to transfer electrons derived from NADH and succinate to molecular oxygen, creating an electrochemical gradient over the inner membrane that drives transmembrane transport and the ATP synthase. Cytochrome c oxidase is the component of the respiratory chain that catalyzes the reduction of oxygen to water. Electrons originating from reduced cytochrome c in the intermembrane space (IMS) are transferred via the dinuclear copper A center (CU(A)) of subunit 2 and heme A of subunit 1 to the active site in subunit 1, a binuclear center (BNC) formed by heme A3 and copper B (CU(B)). The BNC reduces molecular oxygen to 2 water molecules using 4 electrons from cytochrome c in the IMS and 4 protons from the mitochondrial matrix. This chain is Cytochrome c oxidase subunit 2 (COII), found in Pisaster ochraceus (Ochre sea star).